We begin with the raw amino-acid sequence, 62 residues long: Protein DsrB (62 aa).

The protein belongs to the DsrB family.

The protein is Protein DsrB of Enterobacter sp. (strain 638).